Consider the following 152-residue polypeptide: Ribonuclease pancreatic (152 aa).

The N-terminal stretch at methionine 1–glycine 24 is a signal peptide. 2 residues coordinate substrate: lysine 31 and arginine 34. The active-site Proton acceptor is the histidine 36. A glycan (N-linked (GlcNAc...) asparagine) is linked at asparagine 46. Disulfide bonds link cysteine 50–cysteine 108, cysteine 64–cysteine 119, cysteine 82–cysteine 134, and cysteine 89–cysteine 96. Substrate contacts are provided by residues lysine 65–threonine 69, lysine 90, and arginine 109. The N-linked (GlcNAc...) asparagine glycan is linked to asparagine 112. Catalysis depends on histidine 143, which acts as the Proton donor.

The protein belongs to the pancreatic ribonuclease family. In terms of assembly, monomer. Interacts with and forms tight 1:1 complexes with RNH1. Dimerization of two such complexes may occur. Interaction with RNH1 inhibits this protein.

The protein resides in the secreted. It catalyses the reaction an [RNA] containing cytidine + H2O = an [RNA]-3'-cytidine-3'-phosphate + a 5'-hydroxy-ribonucleotide-3'-[RNA].. The catalysed reaction is an [RNA] containing uridine + H2O = an [RNA]-3'-uridine-3'-phosphate + a 5'-hydroxy-ribonucleotide-3'-[RNA].. Endonuclease that catalyzes the cleavage of RNA on the 3' side of pyrimidine nucleotides. Acts on single-stranded and double-stranded RNA. The chain is Ribonuclease pancreatic (RNASE1) from Miopithecus talapoin (Angolan talapoin).